Consider the following 355-residue polypeptide: Trans-enoyl reductase (355 aa).

Residue 45 to 48 coordinates NADP(+); the sequence is VDTK. 131 to 138 serves as a coordination point for substrate; the sequence is ISFMTTGL. Residues 166 to 169, 189 to 192, Tyr-207, and 254 to 255 contribute to the NADP(+) site; these read SSAT, SPRN, and LE. 275 to 279 provides a ligand contact to substrate; that stretch reads GPQML. Position 344 to 345 (344 to 345) interacts with NADP(+); sequence IS.

Belongs to the zinc-containing alcohol dehydrogenase family. Monomer.

It carries out the reaction L-serine + 7 malonyl-CoA + acetyl-CoA + 2 S-adenosyl-L-methionine + ATP + 8 NADPH + 11 H(+) = (5S)-3-[(2E,6R,8E,10E,12E)-2,6-dimethyltetradeca-2,8,10,12-tetraenoyl]-5-(hydroxymethyl)pyrrolidine-2,4-dione + AMP + 2 S-adenosyl-L-homocysteine + 7 CO2 + diphosphate + 8 NADP(+) + 8 CoA + 6 H2O. It functions in the pathway mycotoxin biosynthesis. Its function is as follows. Hybrid PKS-NRPS synthetase; part of the gene cluster that mediates the biosynthesis of trichosetin, a trans-fused decalin-containing tetramic acid with antimicrobial activity. The PKS module of PKS-NRPS1 together with the enoylreductase (ER) catalyze the formation of the polyketide unit which is then conjugated to L-serine by the condensation domain of the PKS-NRPS1 NRPS module. Activity of the Dieckmann cyclase domain (RED) results in release of the Dieckmann product intermediate. Diels-Alderase (DA) is involved in endo-selective Diels-Alder cycloaddition to form the decalin ring, leading to the production of N-desmethylequisetin also called trichosetin. The cluster does not contain the equisetin N-methyltransferase and consequently, trichosetin is isolated as final product. The sequence is that of Trans-enoyl reductase from Gibberella fujikuroi (strain CBS 195.34 / IMI 58289 / NRRL A-6831) (Bakanae and foot rot disease fungus).